The sequence spans 204 residues: Small ribosomal subunit protein uS4 (204 aa).

Residues 95–157 enclose the S4 RNA-binding domain; it reads RRLDNTVFRM…KGIHSIIRHN (63 aa).

This sequence belongs to the universal ribosomal protein uS4 family. In terms of assembly, part of the 30S ribosomal subunit. Contacts protein S5. The interaction surface between S4 and S5 is involved in control of translational fidelity.

Its function is as follows. One of the primary rRNA binding proteins, it binds directly to 16S rRNA where it nucleates assembly of the body of the 30S subunit. With S5 and S12 plays an important role in translational accuracy. This is Small ribosomal subunit protein uS4 from Treponema pallidum (strain Nichols).